The primary structure comprises 199 residues: MSCMPVSTKCNDIWVDFSCTGPSISELQKKEPKAWAAILRSHTNQQTAEDDTIIGSICDKQGLCSKDEYAYSQYCACVNSGTLWAECAFAPCNGNKNAYKTTEQRNILTNKQCPSGLTICQNIAEYGGSGNISDLYQNFNCNSVINTFLINVMNHPFLTLILIILILIIIYRLMSSSGGKHNDDKLPPPSLIFSNLNNF.

N131 is a glycosylation site (N-linked (GlcNAc...) asparagine; by host). Residues 150–170 (INVMNHPFLTLILIILILIII) form a helical membrane-spanning segment.

It belongs to the asfivirus E199L family. In terms of assembly, interacts with host PYCR2; this interaction results in autophagy activation. In terms of processing, contains intramolecular disulfide bonds.

It localises to the virion membrane. The protein localises to the host membrane. Essential for viral fusion with host endosomal membrane and core release. Not required for virus morphogenesis and egress. Induces complete autophagy through the interaction with and down-regulation of host PYCR2. This is Inner membrane protein E199L from African swine fever virus (isolate Tick/South Africa/Pretoriuskop Pr4/1996) (ASFV).